We begin with the raw amino-acid sequence, 62 residues long: uncharacterized protein (62 aa).

This is an uncharacterized protein from Acidianus filamentous virus 2 (isolate Italy/Pozzuoli) (AFV-2).